We begin with the raw amino-acid sequence, 196 residues long: DnaA initiator-associating protein DiaA (196 aa).

The 163-residue stretch at 34–196 (LVQSLLNGNK…DSTLFPHQDE (163 aa)) folds into the SIS domain.

The protein belongs to the SIS family. DiaA subfamily. As to quaternary structure, homotetramer; dimer of dimers.

Functionally, required for the timely initiation of chromosomal replication via direct interactions with the DnaA initiator protein. The chain is DnaA initiator-associating protein DiaA from Serratia proteamaculans (strain 568).